A 357-amino-acid chain; its full sequence is Holliday junction branch migration complex subunit RuvB (357 aa).

A compositionally biased stretch (low complexity) spans 1 to 15 (MAIQSDSLSSLPDSP). The tract at residues 1–30 (MAIQSDSLSSLPDSPRIVAPQPVSPNEESI) is disordered. A large ATPase domain (RuvB-L) region spans residues 13–195 (DSPRIVAPQP…FGIVSRLEFY (183 aa)). ATP contacts are provided by residues Leu-34, Arg-35, Gly-76, Lys-79, Thr-80, Thr-81, 142–144 (EDF), Arg-185, Tyr-195, and Arg-232. Thr-80 provides a ligand contact to Mg(2+). Residues 196-266 (NTDELARIVT…AAGRALAMLD (71 aa)) form a small ATPAse domain (RuvB-S) region. The head domain (RuvB-H) stretch occupies residues 269-357 (PQGLDVMDRK…SGGTGELFSK (89 aa)). DNA is bound by residues Arg-305, Arg-324, and Arg-329.

Belongs to the RuvB family. Homohexamer. Forms an RuvA(8)-RuvB(12)-Holliday junction (HJ) complex. HJ DNA is sandwiched between 2 RuvA tetramers; dsDNA enters through RuvA and exits via RuvB. An RuvB hexamer assembles on each DNA strand where it exits the tetramer. Each RuvB hexamer is contacted by two RuvA subunits (via domain III) on 2 adjacent RuvB subunits; this complex drives branch migration. In the full resolvosome a probable DNA-RuvA(4)-RuvB(12)-RuvC(2) complex forms which resolves the HJ.

The protein resides in the cytoplasm. The enzyme catalyses ATP + H2O = ADP + phosphate + H(+). Functionally, the RuvA-RuvB-RuvC complex processes Holliday junction (HJ) DNA during genetic recombination and DNA repair, while the RuvA-RuvB complex plays an important role in the rescue of blocked DNA replication forks via replication fork reversal (RFR). RuvA specifically binds to HJ cruciform DNA, conferring on it an open structure. The RuvB hexamer acts as an ATP-dependent pump, pulling dsDNA into and through the RuvAB complex. RuvB forms 2 homohexamers on either side of HJ DNA bound by 1 or 2 RuvA tetramers; 4 subunits per hexamer contact DNA at a time. Coordinated motions by a converter formed by DNA-disengaged RuvB subunits stimulates ATP hydrolysis and nucleotide exchange. Immobilization of the converter enables RuvB to convert the ATP-contained energy into a lever motion, pulling 2 nucleotides of DNA out of the RuvA tetramer per ATP hydrolyzed, thus driving DNA branch migration. The RuvB motors rotate together with the DNA substrate, which together with the progressing nucleotide cycle form the mechanistic basis for DNA recombination by continuous HJ branch migration. Branch migration allows RuvC to scan DNA until it finds its consensus sequence, where it cleaves and resolves cruciform DNA. This chain is Holliday junction branch migration complex subunit RuvB, found in Bordetella bronchiseptica (strain ATCC BAA-588 / NCTC 13252 / RB50) (Alcaligenes bronchisepticus).